The primary structure comprises 1218 residues: NACHT, LRR and PYD domains-containing protein 1 allele 2 (1218 aa).

The interval 1–61 (MEESQSKQES…SLPGWSSTSK (61 aa)) is disordered. Residues 7 to 29 (KQESNTRVAQHGSQQDVDPTFQT) are compositionally biased toward polar residues. The region spanning 175–484 (QLVIIEGAAG…EFFAAMSYIL (310 aa)) is the NACHT domain. 181-188 (GAAGIGKS) contributes to the ATP binding site. LRR repeat units follow at residues 343 to 364 (KERN…LTLC), 673 to 693 (NLEE…RSLC), and 730 to 750 (RLAE…RQLC). Residues 799–815 (TMPTENTDGEESLTSSK) show a composition bias toward polar residues. A disordered region spans residues 799-842 (TMPTENTDGEESLTSSKQQQQQSGDKHMEPLGTDDDFWGPSGPV). The interval 835 to 968 (FWGPSGPVST…HFAVLENPSF (134 aa)) is ZU5. Residues 835-1118 (FWGPSGPVST…LRPALPRMAS (284 aa)) enclose the FIIND domain. The tract at residues 969–1118 (SPMGVLLRMI…LRPALPRMAS (150 aa)) is UPA. Positions 1122–1211 (DAPALLHFVD…HLIMDLLEKS (90 aa)) constitute a CARD domain.

The protein belongs to the NLRP family. Interacts (via LRR repeats) with BCL2 and BCL2L1 (via the loop between motifs BH4 and BH3). Interacts with NOD2; this interaction is enhanced in the presence of muramyl dipeptide (MDP) and increases IL1B release. Interacts with EIF2AK2/PKR; this interaction requires EIF2AK2 activity, is accompanied by EIF2AK2 autophosphorylation and promotes inflammasome assembly in response to danger-associated signals. Interacts with MEFV; this interaction targets Nlrp1a to degradation by autophagy, hence preventing excessive IL1B- and IL18-mediated inflammation. Interacts with DPP9; leading to inhibit activation of the inflammasome. DPP9 acts via formation of a ternary complex, composed of a DPP9 homodimer, one full-length NLRP1 protein, and one cleaved C-terminus of Nlrp1a (NACHT, LRR and PYD domains-containing protein 1a, C-terminus). Interacts with DPP8; leading to inhibit activation of the inflammasome, probably via formation of a ternary complex with DPP8. As to quaternary structure, interacts with the C-terminal part of Nlrp1a (NACHT, LRR and PYD domains-containing protein 1a, C-terminus) in absence of pathogens and other damage-associated signals. In terms of assembly, interacts with the N-terminal part of Nlrp1a (NACHT, LRR and PYD domains-containing protein 1a, N-terminus) in absence of pathogens and other damage-associated signals. Homomultimer; forms the Nlrp1a inflammasome polymeric complex, a filament composed of homopolymers of this form in response to pathogens and other damage-associated signals. The Nlrp1a inflammasome polymeric complex directly recruits pro-caspase-1 (proCASP1) independently of PYCARD/ASC. Interacts (via CARD domain) with CASP1 (via CARD domain); leading to CASP1 activation. In terms of processing, autocatalytically cleaved. Autocatalytic cleavage in FIIND region occurs constitutively, prior to activation signals, and is required for inflammasome activity (IL1B release), possibly by facilitating CASP1 binding. Both N- and C-terminal parts remain associated non-covalently. (Microbial infection) Cleavage by B.anthracis lethal toxin (LT) endopeptidase promotes ubiquitination and degradation of the N-terminal part, releasing the cleaved C-terminal part of the protein (NACHT, LRR and PYD domains-containing protein 1a, C-terminus), which polymerizes and forms the Nlrp1a inflammasome. Post-translationally, ubiquitinated in response to pathogen-associated signals, leading to its degradation by the proteasome and subsequent release of the cleaved C-terminal part of the protein (NACHT, LRR and PYD domains-containing protein 1a, C-terminus), which polymerizes and forms the Nlrp1a inflammasome.

The protein resides in the cytoplasm. It is found in the cytosol. Its subcellular location is the nucleus. The protein localises to the inflammasome. With respect to regulation, activated by cleavage by B.anthracis lethal toxin (LT) endopeptidase. Cleavage by LT promotes ubiquitination and degradation of the N-terminal part, releasing the cleaved C-terminal part of the protein (NACHT, LRR and PYD domains-containing protein 1a, C-terminus), which polymerizes and forms the Nlrp1a inflammasome. Nlrp1a inflammasome is inhibited by DPP8 and DPP9, which sequester the C-terminal fragment of Nlrp1a (NACHT, LRR and PYD domains-containing protein 1a, C-terminus) in a ternary complex, thereby preventing Nlrp1a oligomerization and activation. Nlrp1a inflammasome is weakly activated by Val-boroPro (Talabostat, PT-100), an inhibitor of dipeptidyl peptidases DPP8 and DPP9. Val-boroPro relieves inhibition of DPP8 and/or DPP9 by promoting disruption of the ternary complex, releasing its C-terminal part from autoinhibition. Weakly activated by Toxoplasma gondii. In terms of biological role, acts as the sensor component of the Nlrp1a inflammasome, which mediates inflammasome activation in response to various pathogen-associated signals, leading to subsequent pyroptosis. Inflammasomes are supramolecular complexes that assemble in the cytosol in response to pathogens and other damage-associated signals and play critical roles in innate immunity and inflammation. Acts as a recognition receptor (PRR): recognizes specific pathogens and other damage-associated signals, such as B.anthracis lethal toxin (LT) or Val-boroPro inhibitor, and mediates the formation of the inflammasome polymeric complex. In response to pathogen-associated signals, the N-terminal part of Nlrp1a is degraded by the proteasome, releasing the cleaved C-terminal part of the protein (NACHT, LRR and PYD domains-containing protein 1a, C-terminus), which polymerizes to initiate the formation of the inflammasome complex: the inflammasome directly recruits pro-caspase-1 (proCASP1) independently of PYCARD/ASC and promotes caspase-1 (CASP1) activation, which subsequently cleaves and activates inflammatory cytokines IL1B and IL18 and gasdermin-D (GSDMD), leading to pyroptosis. In the absence of GSDMD expression, the Nlrp1a inflammasome is able to recruit and activate CASP8, leading to activation of gasdermin-E (GSDME). Constitutes the precursor of the Nlrp1a inflammasome, which mediates autoproteolytic processing within the FIIND domain to generate the N-terminal and C-terminal parts, which are associated non-covalently in absence of pathogens and other damage-associated signals. Its function is as follows. Regulatory part that prevents formation of the Nlrp1a inflammasome: in absence of pathogens and other damage-associated signals, interacts with the C-terminal part of Nlrp1a (NACHT, LRR and PYD domains-containing protein 1a, C-terminus), preventing activation of the Nlrp1a inflammasome. In response to pathogen-associated signals, this part is ubiquitinated by the N-end rule pathway and degraded by the proteasome, releasing the cleaved C-terminal part of the protein, which polymerizes and forms the Nlrp1a inflammasome. Functionally, constitutes the active part of the Nlrp1a inflammasome. In absence of pathogens and other damage-associated signals, interacts with the N-terminal part of Nlrp1a (NACHT, LRR and PYD domains-containing protein 1a, N-terminus), preventing activation of the Nlrp1a inflammasome. In response to pathogen-associated signals, the N-terminal part of Nlrp1a is degraded by the proteasome, releasing this form, which polymerizes to form the Nlrp1a inflammasome complex: the Nlrp1a inflammasome complex then directly recruits pro-caspase-1 (proCASP1) and promotes caspase-1 (CASP1) activation, leading to gasdermin-D (GSDMD) cleavage and subsequent pyroptosis. In Rattus norvegicus (Rat), this protein is NACHT, LRR and PYD domains-containing protein 1 allele 2.